We begin with the raw amino-acid sequence, 411 residues long: Heterogeneous nuclear ribonucleoprotein 1 (411 aa).

The 77-residue stretch at 6–82 folds into the RRM 1 domain; it reads GKLFVGGISW…REVDVKRAMS (77 aa). Disordered regions lie at residues 81–103, 183–221, and 358–411; these read MSRE…SSGG, KRAL…DGRM, and AAYG…RQGQ. Polar residues predominate over residues 87 to 101; that stretch reads QVSGRTGNLNTSRSS. One can recognise an RRM 2 domain in the interval 110 to 187; sequence KKIFVGGLPP…KQVEVKRALP (78 aa). Gly residues-rich tracts occupy residues 192–212, 362–387, and 397–411; these read PGGG…GYGG, VVGG…GYGD, and GYGG…RQGQ. The nuclear targeting sequence (M9) stretch occupies residues 341–390; it reads GYGYGGYSGSDSGYGNQAAYGVVGGRPSGGGSNNPGSGGYMGGGYGDGSW.

As to quaternary structure, component of the spliceosome. Interacts with TRN1.

The protein resides in the nucleus. It localises to the cytoplasm. In terms of biological role, involved with pre-mRNA processing. Forms complexes (ribonucleosomes) with at least 20 other different hnRNP and heterogeneous nuclear RNA in the nucleus. Functionally, involved in the packaging of pre-mRNA into hnRNP particles, transport of poly(A) mRNA from the nucleus to the cytoplasm and may modulate splice site selection. In Arabidopsis thaliana (Mouse-ear cress), this protein is Heterogeneous nuclear ribonucleoprotein 1 (RNP1).